We begin with the raw amino-acid sequence, 213 residues long: MPMEPLILRHGGSVGWIEVICGSMFSGKTEELIRRLRRAQIARQRVEVFKPRMDRRYSETDVVSHDENALRSTPVDSAEQILLLADSADVVGIDEAQFFDMTLVDVCQQLANDGKRVIVAGLDQEYMGRPLEPMPQFMAVAEYVTKLHAICAVCGAPANHSQRLTDEEGRVVLGAADRYEPRCRRCFQPPRPTSTSSLKAPAPAATAPRPELP.

ATP is bound by residues 22–29 (GSMFSGKT) and 94–97 (DEAQ). Glu-95 (proton acceptor) is an active-site residue. Zn(2+) is bound by residues Cys-151, Cys-154, Cys-183, and Cys-186. Residues 185–213 (RCFQPPRPTSTSSLKAPAPAATAPRPELP) are disordered. Residues 193–213 (TSTSSLKAPAPAATAPRPELP) show a composition bias toward low complexity.

Belongs to the thymidine kinase family. As to quaternary structure, homotetramer.

It localises to the cytoplasm. The enzyme catalyses thymidine + ATP = dTMP + ADP + H(+). This chain is Thymidine kinase, found in Rhodothermus sp. (strain ITI 518).